A 364-amino-acid chain; its full sequence is PDZ and LIM domain protein 3 (364 aa).

Positions 1 to 84 (MPQTVILPGP…QLCLKIDRGE (84 aa)) constitute a PDZ domain. Ser18, Ser93, and Ser264 each carry phosphoserine. In terms of domain architecture, LIM zinc-binding spans 292–351 (PLCDKCGSGIVGAVVKARDKYRHPECFVCADCNLNLKQKGYFFIEGELYCETHARARTKP).

As to quaternary structure, interacts with ACTN2. Forms a heterodimer with PDLIM4 (via LIM domain). In terms of tissue distribution, isoform 1 is highly expressed in differentiated skeletal muscle. Isoform 2 is heart-specific.

Its subcellular location is the cytoplasm. The protein localises to the myofibril. It localises to the sarcomere. It is found in the z line. Functionally, may play a role in the organization of actin filament arrays within muscle cells. In Homo sapiens (Human), this protein is PDZ and LIM domain protein 3 (PDLIM3).